The primary structure comprises 248 residues: Serine/arginine-rich splicing factor 1 (248 aa).

An N-acetylserine modification is found at S2. S2 is subject to Phosphoserine. Residues 16-91 form the RRM 1 domain; it reads CRIYVGNLPP…YRLRVEFPRS (76 aa). K30 is covalently cross-linked (Glycyl lysine isopeptide (Lys-Gly) (interchain with G-Cter in SUMO2)). K38 is subject to N6-acetyllysine; alternate. Residue K38 forms a Glycyl lysine isopeptide (Lys-Gly) (interchain with G-Cter in SUMO2); alternate linkage. A disordered region spans residues 88 to 134; the sequence is FPRSGRGTGRGGGGGGGGGAPRGRYGPPSRRSENRVVVSGLPPSGSW. 3 positions are modified to asymmetric dimethylarginine; alternate: R93, R97, and R109. Residues R93, R97, and R109 each carry the omega-N-methylarginine; alternate modification. A compositionally biased stretch (gly residues) spans 93 to 108; the sequence is RGTGRGGGGGGGGGAP. Position 111 is an omega-N-methylarginine (R111). The RRM 2 domain occupies 121–195; that stretch reads NRVVVSGLPP…ETAYIRVKVD (75 aa). S133 is subject to Phosphoserine. An N6-acetyllysine modification is found at K179. Positions 191–248 are disordered; sequence RVKVDGPRSPSYGRSRSRSRSRSRSRSRSNSRSRSYSPRRSRGSPRYSPRHSRSRSRT. Residues 198-247 form an interaction with SAFB1 region; sequence RSPSYGRSRSRSRSRSRSRSRSNSRSRSYSPRRSRGSPRYSPRHSRSRSR. S199 and S201 each carry phosphoserine. Y202 carries the post-translational modification Phosphotyrosine. S205, S207, S209, S231, S234, and S238 each carry phosphoserine. Over residues 205 to 248 the composition is skewed to basic residues; that stretch reads SRSRSRSRSRSRSRSNSRSRSYSPRRSRGSPRYSPRHSRSRSRT.

It belongs to the splicing factor SR family. As to quaternary structure, consists of two polypeptides of p32 and p33. Identified in the spliceosome C complex. Component of a ribonucleoprotein complex containing mRNAs and RNA-binding proteins including DDX5, HNRNPH2 and SRSF1 as well as splicing regulator ARVCF. In vitro, self-associates and binds SRSF2, SNRNP70 and U2AF1 but not U2AF2. Binds SREK1/SFRS12. Interacts with SAFB/SAFB1. Interacts with PSIP1/LEDGF. Interacts with RSRC1 (via Arg/Ser-rich domain). Interacts with ZRSR2/U2AF1-RS2. Interacts with CCDC55 (via C-terminus). Interacts with SRPK1 and a sliding docking interaction is essential for its sequential and processive phosphorylation by SRPK1. Interacts with NXF1. Interacts with CCNL1, CCNL2 and CDK11B. Interacts with RRP1B. Interacts (when phosphorylated in its RS domain) with TNPO3; promoting nuclear import. Interacts with ILDR1 (via C-terminus) and ILDR2. Phosphorylated by CLK1, CLK2, CLK3 and CLK4. Phosphorylated by SRPK1 at multiple serines in its RS domain via a directional (C-terminal to N-terminal) and a dual-track mechanism incorporating both processive phosphorylation (in which the kinase stays attached to the substrate after each round of phosphorylation) and distributive phosphorylation steps (in which the kinase and substrate dissociate after each phosphorylation event). The RS domain of SRSF1 binds to a docking groove in the large lobe of the kinase domain of SRPK1 and this induces certain structural changes in SRPK1 and/or RRM 2 domain of SRSF1, allowing RRM 2 to bind the kinase and initiate phosphorylation. The cycles continue for several phosphorylation steps in a processive manner (steps 1-8) until the last few phosphorylation steps (approximately steps 9-12). During that time, a mechanical stress induces the unfolding of the beta-4 motif in RRM 2, which then docks at the docking groove of SRPK1. This also signals RRM 2 to begin to dissociate, which facilitates SRSF1 dissociation after phosphorylation is completed. In terms of processing, asymmetrically dimethylated at arginines, probably by PRMT1, methylation promotes localization to nuclear speckles.

Its subcellular location is the cytoplasm. It is found in the nucleus speckle. Its function is as follows. Plays a role in preventing exon skipping, ensuring the accuracy of splicing and regulating alternative splicing. Interacts with other spliceosomal components, via the RS domains, to form a bridge between the 5'- and 3'-splice site binding components, U1 snRNP and U2AF. Can stimulate binding of U1 snRNP to a 5'-splice site-containing pre-mRNA. Binds to purine-rich RNA sequences, either the octamer, 5'-RGAAGAAC-3' (r=A or G) or the decamers, AGGACAGAGC/AGGACGAAGC. Binds preferentially to the 5'-CGAGGCG-3' motif in vitro. Three copies of the octamer constitute a powerful splicing enhancer in vitro, the ASF/SF2 splicing enhancer (ASE) which can specifically activate ASE-dependent splicing. May function as export adapter involved in mRNA nuclear export through the TAP/NXF1 pathway. The sequence is that of Serine/arginine-rich splicing factor 1 (SRSF1) from Bos taurus (Bovine).